A 304-amino-acid chain; its full sequence is Thymidylate synthase (304 aa).

Residues Arg-30 and 157-158 contribute to the dUMP site; that span reads RR. The active-site Nucleophile is Cys-177. DUMP contacts are provided by residues 206–209, Asn-217, and 247–249; these read RSCD and HVY. Asp-209 contributes to the (6R)-5,10-methylene-5,6,7,8-tetrahydrofolate binding site.

This sequence belongs to the thymidylate synthase family. As to quaternary structure, homodimer.

The protein localises to the nucleus. The enzyme catalyses dUMP + (6R)-5,10-methylene-5,6,7,8-tetrahydrofolate = 7,8-dihydrofolate + dTMP. The protein operates within pyrimidine metabolism; dTTP biosynthesis. With respect to regulation, inhibited by 5-fluoro-2'-deoxyuridine 5'-monophosphate (FdUMP). Functionally, thymidylate synthase required for de novo biosynthesis of pyrimidine deoxyribonucleotides. Required for both nuclear and mitochondrial DNA synthesis. This chain is Thymidylate synthase (CDC21), found in Saccharomyces cerevisiae (strain ATCC 204508 / S288c) (Baker's yeast).